Consider the following 289-residue polypeptide: Ribosomal protein L11 methyltransferase (289 aa).

Residues T135, G156, D179, and N225 each coordinate S-adenosyl-L-methionine.

This sequence belongs to the methyltransferase superfamily. PrmA family.

The protein localises to the cytoplasm. The enzyme catalyses L-lysyl-[protein] + 3 S-adenosyl-L-methionine = N(6),N(6),N(6)-trimethyl-L-lysyl-[protein] + 3 S-adenosyl-L-homocysteine + 3 H(+). Functionally, methylates ribosomal protein L11. This chain is Ribosomal protein L11 methyltransferase, found in Chlorobaculum tepidum (strain ATCC 49652 / DSM 12025 / NBRC 103806 / TLS) (Chlorobium tepidum).